The following is a 318-amino-acid chain: Small ribosomal subunit protein uS2 (318 aa).

This sequence belongs to the universal ribosomal protein uS2 family.

The polypeptide is Small ribosomal subunit protein uS2 (Mesomycoplasma hyopneumoniae (strain J / ATCC 25934 / NCTC 10110) (Mycoplasma hyopneumoniae)).